The sequence spans 308 residues: MEPLSAPLAVGFSAWPPSPPLPPLAHSPLQDAVHADHNHRRILNSCRNLPDCLTTTVPQLHQINSAEQSPLQFTHQPNCDLIVVLDEQTTYTTTMTRRSLPKADRYLSEPNMSTPQASHGSFEFDVPEYTSFDYAFDFPPVPEAFPPAANSSSAASPDADFLDLDSLMSCDITSLDAYIHDDSIASPSNASHISPPASDIDPVDEFFPQLVHNNKIQSSSSSTVETTITRGRKTSSVSSDSSSDYRHKRDKNNLASQKSRQKRQAKIRESKEERERLEKRKVQLQAMVLTLETQVEDYKRLVMMFVKR.

The segment covering 217-229 (QSSSSSTVETTIT) has biased composition (polar residues). The disordered stretch occupies residues 217–277 (QSSSSSTVET…RESKEERERL (61 aa)). The region spanning 242 to 305 (SSDYRHKRDK…EDYKRLVMMF (64 aa)) is the bZIP domain. Positions 246 to 276 (RHKRDKNNLASQKSRQKRQAKIRESKEERER) are basic motif. Residues 266–277 (KIRESKEERERL) show a composition bias toward basic and acidic residues. The leucine-zipper stretch occupies residues 277 to 291 (LEKRKVQLQAMVLTL).

This sequence belongs to the bZIP family. C/EBP subfamily. Expressed in the pharynx and throughout the intestine.

It is found in the nucleus. In terms of biological role, transcription factor that binds to the promoter and the enhancer regions of target genes. May act together with the bZIP transcription factor, cebp-2. Involved in responding to mitochondrial damage. Plays a role in the delay of age-associated mitochondrial fragmentation and muscle decline. Has a protective role in response to infection by the Gram-negative bacterium P.aeruginosa. Required to prevent P.aeruginosa ToxA-mediated lethality. Required for the activation of several infection response genes including irg-1 and irg-2 following P.aeruginosa infection; target gene activation may involve effects of the bacterial toxin, ToxA, and perhaps other toxins. This is Transcription factor zip-2 from Caenorhabditis elegans.